The sequence spans 423 residues: Riboflavin biosynthesis protein RibBA (423 aa).

Residues 1-204 (MTRLDSVERA…IADLIEWRRK (204 aa)) form a DHBP synthase region. Residues 28–29 (RE), Asp-33, 141–145 (RPGHT), and Glu-165 each bind D-ribulose 5-phosphate. Glu-29 is a binding site for Mg(2+). His-144 provides a ligand contact to Mg(2+). The tract at residues 205 to 423 (HEKHIARVAE…AVPGEFGGAV (219 aa)) is GTP cyclohydrolase II. 259–263 (RVHSE) is a GTP binding site. The Zn(2+) site is built by Cys-264, Cys-275, and Cys-277. GTP-binding positions include Gln-280, 303–305 (EGR), and Thr-325. Catalysis depends on Asp-337, which acts as the Proton acceptor; for GTP cyclohydrolase activity. The active-site Nucleophile; for GTP cyclohydrolase activity is Arg-339. 2 residues coordinate GTP: Thr-360 and Lys-365.

This sequence in the N-terminal section; belongs to the DHBP synthase family. In the C-terminal section; belongs to the GTP cyclohydrolase II family. Mg(2+) is required as a cofactor. It depends on Mn(2+) as a cofactor. Requires Zn(2+) as cofactor.

It carries out the reaction D-ribulose 5-phosphate = (2S)-2-hydroxy-3-oxobutyl phosphate + formate + H(+). It catalyses the reaction GTP + 4 H2O = 2,5-diamino-6-hydroxy-4-(5-phosphoribosylamino)-pyrimidine + formate + 2 phosphate + 3 H(+). The protein operates within cofactor biosynthesis; riboflavin biosynthesis; 2-hydroxy-3-oxobutyl phosphate from D-ribulose 5-phosphate: step 1/1. It functions in the pathway cofactor biosynthesis; riboflavin biosynthesis; 5-amino-6-(D-ribitylamino)uracil from GTP: step 1/4. Its function is as follows. Catalyzes the conversion of D-ribulose 5-phosphate to formate and 3,4-dihydroxy-2-butanone 4-phosphate. Catalyzes the conversion of GTP to 2,5-diamino-6-ribosylamino-4(3H)-pyrimidinone 5'-phosphate (DARP), formate and pyrophosphate. The chain is Riboflavin biosynthesis protein RibBA from Mycolicibacterium gilvum (strain PYR-GCK) (Mycobacterium gilvum (strain PYR-GCK)).